A 578-amino-acid chain; its full sequence is Longifolene synthase (578 aa).

Residues Asp-331, Asp-335, and Asp-475 each coordinate Mg(2+). A DDXXD motif motif is present at residues 331-335 (DDLYD).

This sequence belongs to the terpene synthase family. Tpsd subfamily. Mg(2+) serves as cofactor. It depends on Mn(2+) as a cofactor.

The protein resides in the cytoplasm. The enzyme catalyses (2E,6E)-farnesyl diphosphate = longifolene + diphosphate. It participates in sesquiterpene biosynthesis. Its pathway is terpene metabolism; oleoresin biosynthesis. Functionally, involved in defensive oleoresin formation in conifers in response to insect attack or other injury. Involved in sesquiterpene (C15) olefins biosynthesis. Produces mainly longifolene, but also multiple minor products including alpha-longipinene, alpha-longicyclene, E-beta-farnesene, longiborneol, cyclosativene, beta-longipinene, and 12 other sesquiterpenes when used with farnesyl diphosphate (FPP) as substrate. In Picea abies (Norway spruce), this protein is Longifolene synthase (TPS-Lon).